A 96-amino-acid chain; its full sequence is Cathelin (96 aa).

Q1 bears the Pyrrolidone carboxylic acid mark. A disordered region spans residues 31–50 (DQPPKADEDPGTPKPVSFTV). 2 cysteine pairs are disulfide-bonded: C55–C66 and C73–C90.

The protein belongs to the cathelicidin family.

The protein localises to the secreted. Functionally, probably a microbicidal peptide. This is Cathelin from Sus scrofa (Pig).